The chain runs to 157 residues: MAVEILNESGIEVPEDALLRMARHVYARLHVHERAETAVTVVDAARMAELHEEWMDLPGPTDVMSLPMDELTPGSPEAPAEGVLGDVVLCPEVAAEQAARGGHSRDDELLLLLTHGMLHLLGYDHVEDAEREEMFTLQDRLVSEVLGRPAPAPTVED.

Residues His115, His119, and His125 each coordinate Zn(2+).

It belongs to the endoribonuclease YbeY family. It depends on Zn(2+) as a cofactor.

It is found in the cytoplasm. Single strand-specific metallo-endoribonuclease involved in late-stage 70S ribosome quality control and in maturation of the 3' terminus of the 16S rRNA. In Micrococcus luteus (strain ATCC 4698 / DSM 20030 / JCM 1464 / CCM 169 / CCUG 5858 / IAM 1056 / NBRC 3333 / NCIMB 9278 / NCTC 2665 / VKM Ac-2230) (Micrococcus lysodeikticus), this protein is Endoribonuclease YbeY.